We begin with the raw amino-acid sequence, 187 residues long: UPF0301 protein lpl0620 (187 aa).

This sequence belongs to the UPF0301 (AlgH) family.

This chain is UPF0301 protein lpl0620, found in Legionella pneumophila (strain Lens).